Consider the following 207-residue polypeptide: Small ribosomal subunit protein uS4 (207 aa).

Residues 31-53 (KAKFDSKPGQHGRTSGARTSDYG) form a disordered region. The S4 RNA-binding domain occupies 97–157 (CRLDNVVYRM…EKSKKQARIV (61 aa)).

Belongs to the universal ribosomal protein uS4 family. Part of the 30S ribosomal subunit. Contacts protein S5. The interaction surface between S4 and S5 is involved in control of translational fidelity.

Its function is as follows. One of the primary rRNA binding proteins, it binds directly to 16S rRNA where it nucleates assembly of the body of the 30S subunit. Functionally, with S5 and S12 plays an important role in translational accuracy. This is Small ribosomal subunit protein uS4 from Acidovorax ebreus (strain TPSY) (Diaphorobacter sp. (strain TPSY)).